Reading from the N-terminus, the 372-residue chain is Oxoglutarate-dependent flavonoid 7-O-demethylase 1 (372 aa).

In terms of domain architecture, Fe2OG dioxygenase spans 221-321 (GIQALRMNYY…RLSVAAFLNP (101 aa)). Residues His245, Asp247, and His302 each contribute to the Fe cation site. Arg312 provides a ligand contact to 2-oxoglutarate.

Belongs to the iron/ascorbate-dependent oxidoreductase family. As to quaternary structure, monomer. Fe(2+) serves as cofactor. It depends on L-ascorbate as a cofactor. As to expression, accumulates in the trichomes of nevadensin-accumulating strains (e.g. cv. SD and cv. EMX-1) and in cv. SW (at protein level) but not in cv. MC.

Its subcellular location is the cytoplasm. It carries out the reaction gardenin B + 2-oxoglutarate + O2 = nevadensin + formaldehyde + succinate + CO2 + H(+). The enzyme catalyses 8-hydroxysalvigenin + 2-oxoglutarate + O2 = pilosin + formaldehyde + succinate + CO2. Its pathway is flavonoid metabolism. Its activity is regulated as follows. Inhibited by prohexadione-calcium, a 2-oxoglutarate-dependent dioxygenase (2-ODD) inhibitor, thus leading to a decreased abundance of nevadensin (NEV) and absence of pilosin (PIL) production, but to the accumulation of gardenin B (GARD B) and 8-hydroxysalvigenin (8-OH-SALV). Its function is as follows. Oxoglutarate-dependent dioxygenase (2-ODD) acting as a flavonoid 7-O-demethylase involved in the biosynthesis of polymethoxylated flavonoids natural products such as nevadensin and salvigenin, aroma compounds which contribute to the flavor of sweet basil, and exhibit pharmacological activities such as anti-allergic, anti-oxidant, antibacterial, anti-proliferative, and anti-inflammatory effects. Catalyzes the 7-O-demethylation of methoxylated flavones; mediates the conversion of 8-hydroxysalvigenin (8-OH-SALV) to pilosin (PIL) and of gardenin B (GARD B) to nevadensin (NEV). This chain is Oxoglutarate-dependent flavonoid 7-O-demethylase 1, found in Ocimum basilicum (Sweet basil).